Here is a 494-residue protein sequence, read N- to C-terminus: DEAD-box ATP-dependent RNA helicase 20 (494 aa).

Positions 1–20 are enriched in basic and acidic residues; it reads MSRFDGRAADPGSYRDRRSE. The interval 1–39 is disordered; the sequence is MSRFDGRAADPGSYRDRRSEGAFGGGTRAFAPTSKADSA. The segment covering 29–39 has biased composition (low complexity); it reads AFAPTSKADSA. The short motif at 91-119 is the Q motif element; the sequence is REFRDVGFPEYVLQEITKAGFVEPTPIQS. Residues 122-297 enclose the Helicase ATP-binding domain; sequence WPMALRGRDL…RNFLFDPYKV (176 aa). An ATP-binding site is contributed by 135-142; the sequence is AETGSGKT. Positions 245-248 match the DEAD box motif; sequence DEAD. The region spanning 325-470 is the Helicase C-terminal domain; sequence KLVNLLEDIM…KVSPELANMG (146 aa). Residues 465-494 form a disordered region; it reads ELANMGRGAPPPSSGHRDRYRGYGGGRSWS.

Belongs to the DEAD box helicase family. DDX5/DBP2 subfamily.

It is found in the nucleus. The enzyme catalyses ATP + H2O = ADP + phosphate + H(+). Functionally, ATP-dependent RNA helicase involved nonsense-mediated mRNA decay and ribosome biogenesis through rRNA processing. The polypeptide is DEAD-box ATP-dependent RNA helicase 20 (Oryza sativa subsp. japonica (Rice)).